A 235-amino-acid chain; its full sequence is Aspartate/glutamate leucyltransferase (235 aa).

It belongs to the R-transferase family. Bpt subfamily.

It localises to the cytoplasm. The enzyme catalyses N-terminal L-glutamyl-[protein] + L-leucyl-tRNA(Leu) = N-terminal L-leucyl-L-glutamyl-[protein] + tRNA(Leu) + H(+). It catalyses the reaction N-terminal L-aspartyl-[protein] + L-leucyl-tRNA(Leu) = N-terminal L-leucyl-L-aspartyl-[protein] + tRNA(Leu) + H(+). Functionally, functions in the N-end rule pathway of protein degradation where it conjugates Leu from its aminoacyl-tRNA to the N-termini of proteins containing an N-terminal aspartate or glutamate. The polypeptide is Aspartate/glutamate leucyltransferase (Pseudomonas putida (strain ATCC 700007 / DSM 6899 / JCM 31910 / BCRC 17059 / LMG 24140 / F1)).